The primary structure comprises 97 residues: Large ribosomal subunit protein bL27 (97 aa).

The interval 1–21 is disordered; it reads MAHKKGVGSSRNGRDSNPKYR.

This sequence belongs to the bacterial ribosomal protein bL27 family.

The chain is Large ribosomal subunit protein bL27 from Gemmatimonas aurantiaca (strain DSM 14586 / JCM 11422 / NBRC 100505 / T-27).